Here is an 88-residue protein sequence, read N- to C-terminus: Large ribosomal subunit protein bL31B (88 aa).

Belongs to the bacterial ribosomal protein bL31 family. Type B subfamily. As to quaternary structure, part of the 50S ribosomal subunit.

This is Large ribosomal subunit protein bL31B from Nocardia farcinica (strain IFM 10152).